A 419-amino-acid chain; its full sequence is Inward rectifier potassium channel 16 (419 aa).

Over 1-67 the chain is Cytoplasmic; sequence MSYYGSSYRI…MVDIFTTLVD (67 aa). Residues 68 to 94 traverse the membrane as a helical segment; the sequence is TKWRHMFVIFSLSYILSWLIFGSIFWL. At 95–117 the chain is on the extracellular side; that stretch reads IAFHHGDLLSDPDITPCVDNVHS. The segment at residues 118-134 is an intramembrane region (helical; Pore-forming); the sequence is FTAAFLFSLETQTTIGY. Residues 131-136 carry the Selectivity filter motif; it reads TIGYGY. The Extracellular portion of the chain corresponds to 135–143; that stretch reads GYRCVTEEC. A helical membrane pass occupies residues 144–171; that stretch reads SVAVLTVILQSILSCIINTFIIGAALAK. The Cytoplasmic segment spans residues 172–419; it reads MATARKRAQT…LNRISMESQM (248 aa). Residues serine 358, serine 374, and serine 376 each carry the phosphoserine modification.

Belongs to the inward rectifier-type potassium channel (TC 1.A.2.1) family. KCNJ16 subfamily. It forms heteromeric channels with Kir4.1/KCNJ10; this interaction is required for KCNJ16 localization to the basolateral membrane in kidney cells. As a heteromer with KCNJ10, may interact with MAGI1; this interaction may facilitate KCNJ10/KCNJ16 potassium channel expression at the basolateral membrane in kidney cells. May form heteromers with Kir2.1/KCNJ2. Can form heteromeric channels with Kir4.2/KCNJ15. In terms of tissue distribution, abundantly expressed in the proximal and distal segments of the nephron.

The protein localises to the membrane. The protein resides in the basolateral cell membrane. It catalyses the reaction K(+)(in) = K(+)(out). Its activity is regulated as follows. Channel activity is strongly regulated by variations of cytosolic pH; channels are activated by alkaline and inhibited by acidic pH values. Activated by phosphatidylinositol 4,5 biphosphate (PtdIns(4,5)P2). In terms of biological role, inward rectifier potassium channels are characterized by a greater tendency to allow potassium to flow into the cell rather than out of it. Their voltage dependence is regulated by the concentration of extracellular potassium; as external potassium is raised, the voltage range of the channel opening shifts to more positive voltages. The inward rectification is mainly due to the blockage of outward current by internal magnesium. KCNJ16 may be involved in the regulation of fluid and pH balance. In the kidney, together with KCNJ10, mediates basolateral K(+) recycling in distal tubules; this process is critical for Na(+) reabsorption at the tubules. This Mus musculus (Mouse) protein is Inward rectifier potassium channel 16 (Kcnj16).